Reading from the N-terminus, the 391-residue chain is Alpha-2B adrenergic receptor (391 aa).

Residues 1–25 form a helical membrane-spanning segment; that stretch reads AIAAVITFLILFTIFGNALVILAVL. The Cytoplasmic portion of the chain corresponds to 26–36; that stretch reads TSRSLRAPQNL. A helical membrane pass occupies residues 37-62; sequence FLVSLAAADILVATLIIPFSLANELL. The Extracellular segment spans residues 63-72; sequence GYWYFRRTWC. A disulfide bridge links Cys72 with Cys151. A helical transmembrane segment spans residues 73–95; sequence EVYLALDVLFCTSSIVHLCAISL. Residues 96–117 lie on the Cytoplasmic side of the membrane; the sequence is DRYWAVSRALEYNSKRTPRRIK. Residues 118-140 form a helical membrane-spanning segment; it reads CIILTVWLIAAVISLPPLIYKGD. The Extracellular portion of the chain corresponds to 141–156; that stretch reads QGPQPRGRPQCKLNQE. A helical transmembrane segment spans residues 157 to 180; sequence AWYILASSIGSFFAPCLIMILVYL. Residues 181–355 are Cytoplasmic-facing; sequence RIYLIAKRSH…LTREKRFTFV (175 aa). 2 disordered regions span residues 194-218 and 233-312; these read PRAK…APSS and EANR…PLQQ. The span at 233 to 247 shows a compositional bias: basic and acidic residues; that stretch reads EANRHSKSTGEKVEG. Residues 256–266 are compositionally biased toward pro residues; the sequence is PGVPPSWPPLP. A compositionally biased stretch (basic and acidic residues) spans 271–281; sequence GQEEDIYRASP. A compositionally biased stretch (acidic residues) spans 282–294; that stretch reads EEEAGDDEEEECE. The segment covering 295-309 has biased composition (low complexity); the sequence is PQAVPVSPASACSPP. The chain crosses the membrane as a helical span at residues 356 to 379; the sequence is LAVVIGVFVLCWFPFFFSYSLGAI. Over 380–388 the chain is Extracellular; that stretch reads CPQHCKVPH. A helical membrane pass occupies residues 389-391; it reads GLF.

The protein belongs to the G-protein coupled receptor 1 family. Adrenergic receptor subfamily. ADRA2B sub-subfamily. Interacts with RAB26. Interacts with PPP1R9B. Interacts with GGA1, GGA2 and GGA3.

It localises to the cell membrane. Alpha-2 adrenergic receptors mediate the catecholamine-induced inhibition of adenylate cyclase through the action of G proteins. The polypeptide is Alpha-2B adrenergic receptor (ADRA2B) (Erinaceus europaeus (Western European hedgehog)).